Consider the following 148-residue polypeptide: Transcriptional regulator MraZ (148 aa).

2 consecutive SpoVT-AbrB domains span residues 7-56 (KERH…EPDI) and 85-128 (LDVV…APER).

It belongs to the MraZ family. As to quaternary structure, forms oligomers.

The protein resides in the cytoplasm. The protein localises to the nucleoid. The protein is Transcriptional regulator MraZ of Chlorobium phaeobacteroides (strain DSM 266 / SMG 266 / 2430).